A 381-amino-acid polypeptide reads, in one-letter code: MGPIGTEADENQTVEEIKVEPYGPGHTTPRGELAPDPEPELIDSTKLTEVRVVLILAYCSIILLGVVGNSLVIHVVIKFKSMRTVTNFFIANLAVADLLVNTLCLPFTLTYTLMGEWKMGPVLCHLVPYAQGLAVQVSTVTLTVIALDRHRCIVYHLDSKISKQNSFLIIGLAWGISALLASPLAIFREYSLIEIIPDFEIVACTEKWPGEEKSIYGTVYSLSSLLILYVLPLGIISVSYVRIWSKLKNHVSPGAANDHYHQRRQKTTKMLVFVVVVFAVSWLPLHAFQLAVDIDSQVLDLKEYKLIFTVFHIIAMCSTFANPLLYGWMNSNYRKAFLSAFRCQQRLDAIQSEVCVTGKAKTNVEVEKNHGAADSAEATNV.

The disordered stretch occupies residues 1–37; it reads MGPIGTEADENQTVEEIKVEPYGPGHTTPRGELAPDP. Residues 1 to 52 are Extracellular-facing; that stretch reads MGPIGTEADENQTVEEIKVEPYGPGHTTPRGELAPDPEPELIDSTKLTEVRV. The N-linked (GlcNAc...) asparagine glycan is linked to Asn11. Residues 53–73 form a helical membrane-spanning segment; sequence VLILAYCSIILLGVVGNSLVI. At 74–87 the chain is on the cytoplasmic side; that stretch reads HVVIKFKSMRTVTN. Residues 88–108 form a helical membrane-spanning segment; it reads FFIANLAVADLLVNTLCLPFT. The Extracellular portion of the chain corresponds to 109–125; sequence LTYTLMGEWKMGPVLCH. Cys124 and Cys204 are disulfide-bonded. Residues 126 to 146 form a helical membrane-spanning segment; the sequence is LVPYAQGLAVQVSTVTLTVIA. Over 147 to 166 the chain is Cytoplasmic; it reads LDRHRCIVYHLDSKISKQNS. A helical membrane pass occupies residues 167–187; the sequence is FLIIGLAWGISALLASPLAIF. Residues 188–217 are Extracellular-facing; it reads REYSLIEIIPDFEIVACTEKWPGEEKSIYG. The chain crosses the membrane as a helical span at residues 218–238; the sequence is TVYSLSSLLILYVLPLGIISV. Over 239-269 the chain is Cytoplasmic; sequence SYVRIWSKLKNHVSPGAANDHYHQRRQKTTK. A helical transmembrane segment spans residues 270–290; it reads MLVFVVVVFAVSWLPLHAFQL. The Extracellular segment spans residues 291–305; that stretch reads AVDIDSQVLDLKEYK. Residues 306–326 form a helical membrane-spanning segment; that stretch reads LIFTVFHIIAMCSTFANPLLY. The Cytoplasmic portion of the chain corresponds to 327–381; that stretch reads GWMNSNYRKAFLSAFRCQQRLDAIQSEVCVTGKAKTNVEVEKNHGAADSAEATNV. The S-palmitoyl cysteine moiety is linked to residue Cys343.

It belongs to the G-protein coupled receptor 1 family.

It is found in the cell membrane. Its function is as follows. Receptor for neuropeptide Y and peptide YY. In Cavia porcellus (Guinea pig), this protein is Neuropeptide Y receptor type 2 (NPY2R).